Here is a 205-residue protein sequence, read N- to C-terminus: Histone H1, early embryonic (205 aa).

Disordered regions lie at residues 1–21 and 94–205; these read MAEK…HPPA and AKAQ…AKSK. Residues 17-91 enclose the H15 domain; the sequence is AHPPAAEMVA…GASGSFKVNV (75 aa). The span at 98 to 124 shows a compositional bias: basic and acidic residues; the sequence is ASEKAKKEKEKAKLLAQREKAKEKGCS. Basic residues-rich tracts occupy residues 135-150 and 157-205; these read PKKV…KPVK and EKKK…AKSK.

Belongs to the histone H1/H5 family.

Its subcellular location is the nucleus. It is found in the chromosome. In terms of biological role, histones H1 are necessary for the condensation of nucleosome chains into higher-order structures. This is Histone H1, early embryonic from Strongylocentrotus purpuratus (Purple sea urchin).